The sequence spans 417 residues: MAEIKNYTLNFGPQHPAAHGVLRLVLELDGEVIQRADPHIGLLHRATEKLAESKTYIQSLPYMDRLDYVSMMSNEQAYCLAIEKLLGVDVPIRAQYIRVMYAEITRLLNHLLWLGAHGFDCGAMNILIYCFREREALFDMYEAVSGARMHAAYFRPGGVYRDLPDTMPQYRVSKIKNAKAIAALNENRQGSLLDFIDDFVAKFPRLVDEYETLLTDNRIWKQRTVGVGVVSPERALNLGFTGPMLRGSGFAWDLRKQQPYDVYDRMDFDIPVGKTGDCYDRYLVRIEEMRQSNRIIKQCIDWLRVNPGPVITSNHKVAAPDRESMKTNMEELIHHFKLFTEGFHVPEGEAYAAVEHPKGEFGIYIVSDGANKPYRLKIRPPGFPHLAAMDEMSRGHMIADAVAVIGTMDIVFGEIDR.

The protein belongs to the complex I 49 kDa subunit family. As to quaternary structure, NDH-1 is composed of 14 different subunits. Subunits NuoB, C, D, E, F, and G constitute the peripheral sector of the complex.

The protein resides in the cell inner membrane. It carries out the reaction a quinone + NADH + 5 H(+)(in) = a quinol + NAD(+) + 4 H(+)(out). Its function is as follows. NDH-1 shuttles electrons from NADH, via FMN and iron-sulfur (Fe-S) centers, to quinones in the respiratory chain. The immediate electron acceptor for the enzyme in this species is believed to be ubiquinone. Couples the redox reaction to proton translocation (for every two electrons transferred, four hydrogen ions are translocated across the cytoplasmic membrane), and thus conserves the redox energy in a proton gradient. In Polaromonas sp. (strain JS666 / ATCC BAA-500), this protein is NADH-quinone oxidoreductase subunit D.